The following is a 55-amino-acid chain: Neurotoxin BmP08 (55 aa).

The first 23 residues, 1–23, serve as a signal peptide directing secretion; the sequence is MKIFFAVLVILVLFSMLIWTAYG. Intrachain disulfides connect Cys-30-Cys-45, Cys-36-Cys-50, and Cys-39-Cys-53.

Expressed by the venom gland.

It is found in the secreted. The chain is Neurotoxin BmP08 from Olivierus martensii (Manchurian scorpion).